Reading from the N-terminus, the 206-residue chain is Ribosomal RNA small subunit methyltransferase G (206 aa).

S-adenosyl-L-methionine-binding positions include Gly73, Leu78, Val124–Glu125, and Arg139.

The protein belongs to the methyltransferase superfamily. RNA methyltransferase RsmG family.

The protein localises to the cytoplasm. It catalyses the reaction guanosine(527) in 16S rRNA + S-adenosyl-L-methionine = N(7)-methylguanosine(527) in 16S rRNA + S-adenosyl-L-homocysteine. Its function is as follows. Specifically methylates the N7 position of guanine in position 527 of 16S rRNA. This is Ribosomal RNA small subunit methyltransferase G from Yersinia pseudotuberculosis serotype O:1b (strain IP 31758).